We begin with the raw amino-acid sequence, 304 residues long: Energy-coupling factor transporter ATP-binding protein EcfA2 (304 aa).

The 250-residue stretch at 11-260 (LKADEILAVS…QTFLEKTTIV (250 aa)) folds into the ABC transporter domain. 54-61 (GDSGSGKS) provides a ligand contact to ATP.

Belongs to the ABC transporter superfamily. Energy-coupling factor EcfA family. In terms of assembly, forms a stable energy-coupling factor (ECF) transporter complex composed of 2 membrane-embedded substrate-binding proteins (S component), 2 ATP-binding proteins (A component) and 2 transmembrane proteins (T component).

Its subcellular location is the cell membrane. In terms of biological role, ATP-binding (A) component of a common energy-coupling factor (ECF) ABC-transporter complex. Unlike classic ABC transporters this ECF transporter provides the energy necessary to transport a number of different substrates. The protein is Energy-coupling factor transporter ATP-binding protein EcfA2 of Mycoplasma genitalium (strain ATCC 33530 / DSM 19775 / NCTC 10195 / G37) (Mycoplasmoides genitalium).